Reading from the N-terminus, the 252-residue chain is Trans-aconitate 2-methyltransferase (252 aa).

It belongs to the methyltransferase superfamily. Tam family.

It is found in the cytoplasm. It catalyses the reaction trans-aconitate + S-adenosyl-L-methionine = (E)-3-(methoxycarbonyl)pent-2-enedioate + S-adenosyl-L-homocysteine. Its function is as follows. Catalyzes the S-adenosylmethionine monomethyl esterification of trans-aconitate. This is Trans-aconitate 2-methyltransferase from Enterobacter sp. (strain 638).